Reading from the N-terminus, the 1340-residue chain is TSET complex member tstE (1340 aa).

Residues 56–67 (NQSQTSPNSNDG) show a composition bias toward low complexity. Disordered stretches follow at residues 56-75 (NQSQ…GSGG) and 110-131 (SGSG…GGGQ). WD repeat units follow at residues 208 to 246 (VNQI…VIGK), 250 to 294 (DPTE…LQTI), 345 to 384 (GHKK…SFLN), and 397 to 436 (IEHS…NPQE). Positions 1216-1251 (KSHMSSTTTLRRSPSIENIRTTSTTFDSSKFNTDNQ) are enriched in polar residues. Positions 1216 to 1340 (KSHMSSTTTL…TPTPTTTLSS (125 aa)) are disordered. Residues 1252-1275 (ELFDDDSDDDSDSGADADVDSENE) are compositionally biased toward acidic residues. Over residues 1286 to 1318 (ASLQHNDNSSLTNITVTDNDSNLDQDITSNTGS) the composition is skewed to polar residues. Positions 1328–1340 (LSSTPTPTTTLSS) are enriched in low complexity.

In terms of assembly, component of the TSET complex, a heterohexamer composed of tstA, tstB, tstC, tstD, tstE and tstF, which may act in plasma membrane turnover. tstA, tstB, tstC and tstD are likely to be the core complex members with tstE and tstF acting as associated scaffold proteins.

In Dictyostelium discoideum (Social amoeba), this protein is TSET complex member tstE.